A 260-amino-acid polypeptide reads, in one-letter code: DNA repair protein RecO (260 aa).

The interval 239-260 is disordered; it reads SAGVAAARKAGGDGSDGDEGEQ.

The protein belongs to the RecO family.

Involved in DNA repair and RecF pathway recombination. The protein is DNA repair protein RecO of Sodalis glossinidius (strain morsitans).